A 620-amino-acid polypeptide reads, in one-letter code: Translocator protein BipB (620 aa).

The tract at residues 58–95 (QCDAQPAAHDARLDDRPALRAPQERDAPPLGASDTGSR) is disordered. Over residues 66–84 (HDARLDDRPALRAPQERDA) the composition is skewed to basic and acidic residues. Residues 309 to 339 (EMQAKREAELQKKSDEYQAQVKKAEEMQKTM) are a coiled coil. A run of 3 helical transmembrane segments spans residues 355–375 (FAAA…GLAL), 401–421 (AILK…LVAC), and 430–450 (LAGA…AAFV).

Belongs to the SctE/SipB/YopB family.

The protein resides in the secreted. Its subcellular location is the host membrane. Plays a role in the bacterium-induced formation of multinucleated giant cell (MNGC), which is formed after host cell fusion, as well as in the intercellular spreading of bacteria and in the induction of apoptosis in macrophages. May act in concert with other effector proteins to induce fusion of host cell membranes. The chain is Translocator protein BipB (bipB) from Burkholderia mallei (strain NCTC 10247).